The following is a 502-amino-acid chain: Cytochrome P450 3A5 (502 aa).

Cysteine 441 contributes to the heme binding site.

The protein belongs to the cytochrome P450 family. Requires heme as cofactor.

It localises to the endoplasmic reticulum membrane. The protein localises to the microsome membrane. It carries out the reaction an organic molecule + reduced [NADPH--hemoprotein reductase] + O2 = an alcohol + oxidized [NADPH--hemoprotein reductase] + H2O + H(+). It catalyses the reaction 17beta-estradiol + reduced [NADPH--hemoprotein reductase] + O2 = 2-hydroxy-17beta-estradiol + oxidized [NADPH--hemoprotein reductase] + H2O + H(+). The enzyme catalyses 17beta-estradiol + reduced [NADPH--hemoprotein reductase] + O2 = 4-hydroxy-17beta-estradiol + oxidized [NADPH--hemoprotein reductase] + H2O + H(+). The catalysed reaction is estrone + reduced [NADPH--hemoprotein reductase] + O2 = 2-hydroxyestrone + oxidized [NADPH--hemoprotein reductase] + H2O + H(+). It carries out the reaction estrone + reduced [NADPH--hemoprotein reductase] + O2 = 4-hydroxyestrone + oxidized [NADPH--hemoprotein reductase] + H2O + H(+). It catalyses the reaction testosterone + reduced [NADPH--hemoprotein reductase] + O2 = 6beta,17beta-dihydroxyandrost-4-en-3-one + oxidized [NADPH--hemoprotein reductase] + H2O + H(+). The enzyme catalyses androst-4-ene-3,17-dione + reduced [NADPH--hemoprotein reductase] + O2 = 6beta-hydroxyandrost-4-ene-3,17-dione + oxidized [NADPH--hemoprotein reductase] + H2O + H(+). The catalysed reaction is progesterone + reduced [NADPH--hemoprotein reductase] + O2 = 6beta-hydroxyprogesterone + oxidized [NADPH--hemoprotein reductase] + H2O + H(+). It carries out the reaction all-trans-retinol + reduced [NADPH--hemoprotein reductase] + O2 = all-trans-retinal + oxidized [NADPH--hemoprotein reductase] + 2 H2O + H(+). It catalyses the reaction all-trans-retinoate + reduced [NADPH--hemoprotein reductase] + O2 = all-trans-4-hydroxyretinoate + oxidized [NADPH--hemoprotein reductase] + H2O + H(+). It functions in the pathway steroid hormone biosynthesis. Its pathway is cofactor metabolism; retinol metabolism. A cytochrome P450 monooxygenase involved in the metabolism of steroid hormones and vitamins. Mechanistically, uses molecular oxygen inserting one oxygen atom into a substrate, and reducing the second into a water molecule, with two electrons provided by NADPH via cytochrome P450 reductase (NADPH--hemoprotein reductase). Catalyzes the hydroxylation of carbon-hydrogen bonds. Exhibits high catalytic activity for the formation of catechol estrogens from 17beta-estradiol (E2) and estrone (E1), namely 2-hydroxy E1 and E2. Catalyzes 6beta-hydroxylation of the steroid hormones testosterone, progesterone, and androstenedione. Catalyzes the oxidative conversion of all-trans-retinol to all-trans-retinal, a rate-limiting step for the biosynthesis of all-trans-retinoic acid (atRA). Further metabolizes all trans-retinoic acid (atRA) to 4-hydroxyretinoate and may play a role in hepatic atRA clearance. Also involved in the oxidative metabolism of xenobiotics, including calcium channel blocking drug nifedipine and immunosuppressive drug cyclosporine. The sequence is that of Cytochrome P450 3A5 from Homo sapiens (Human).